Reading from the N-terminus, the 296-residue chain is Thymidylate synthase (296 aa).

Residues arginine 23 and 157–158 each bind dUMP; that span reads RR. Residue cysteine 177 is the Nucleophile of the active site. Residues 198 to 201, asparagine 209, and 239 to 241 each bind dUMP; these read RSAD and HIY. Aspartate 201 contacts (6R)-5,10-methylene-5,6,7,8-tetrahydrofolate. Alanine 295 provides a ligand contact to (6R)-5,10-methylene-5,6,7,8-tetrahydrofolate.

It belongs to the thymidylate synthase family. Bacterial-type ThyA subfamily. As to quaternary structure, homodimer.

The protein resides in the cytoplasm. The catalysed reaction is dUMP + (6R)-5,10-methylene-5,6,7,8-tetrahydrofolate = 7,8-dihydrofolate + dTMP. The protein operates within pyrimidine metabolism; dTTP biosynthesis. Its function is as follows. Catalyzes the reductive methylation of 2'-deoxyuridine-5'-monophosphate (dUMP) to 2'-deoxythymidine-5'-monophosphate (dTMP) while utilizing 5,10-methylenetetrahydrofolate (mTHF) as the methyl donor and reductant in the reaction, yielding dihydrofolate (DHF) as a by-product. This enzymatic reaction provides an intracellular de novo source of dTMP, an essential precursor for DNA biosynthesis. The chain is Thymidylate synthase from Zymomonas mobilis subsp. mobilis (strain ATCC 31821 / ZM4 / CP4).